A 403-amino-acid chain; its full sequence is Serine/threonine transporter SstT (403 aa).

9 consecutive transmembrane segments (helical) span residues 14–34 (VTQIVIGLLAGIALALLAPAI), 44–64 (VFVSALKAVAPVLVFILVMAS), 79–99 (ILWLYLLGTFAAAVVAVFASM), 138–158 (ALLNANFIGVLTWAIGLGVAL), 175–195 (GVTLIVRVVIRFAPLGIFGLV), 214–234 (LAVLIGCMLFVALVMNPLIVF), 295–315 (MAGAAITITVLTLAAVHTLGI), 327–347 (VVAAVCACGASGVAGGSLLLI), and 353–373 (LFGIPSEIAMQVVAVGFIIGV).

It belongs to the dicarboxylate/amino acid:cation symporter (DAACS) (TC 2.A.23) family.

The protein resides in the cell inner membrane. The enzyme catalyses L-serine(in) + Na(+)(in) = L-serine(out) + Na(+)(out). The catalysed reaction is L-threonine(in) + Na(+)(in) = L-threonine(out) + Na(+)(out). In terms of biological role, involved in the import of serine and threonine into the cell, with the concomitant import of sodium (symport system). This chain is Serine/threonine transporter SstT, found in Pseudomonas putida (strain ATCC 47054 / DSM 6125 / CFBP 8728 / NCIMB 11950 / KT2440).